Reading from the N-terminus, the 333-residue chain is Probable tRNA pseudouridine synthase B (333 aa).

Asp-66 serves as the catalytic Nucleophile. Residues 233 to 308 (LKKIIVKDSA…EVVEITRVIM (76 aa)) enclose the PUA domain.

Belongs to the pseudouridine synthase TruB family. Type 2 subfamily.

The catalysed reaction is uridine(55) in tRNA = pseudouridine(55) in tRNA. In terms of biological role, could be responsible for synthesis of pseudouridine from uracil-55 in the psi GC loop of transfer RNAs. The chain is Probable tRNA pseudouridine synthase B from Methanococcus maripaludis (strain C5 / ATCC BAA-1333).